A 298-amino-acid chain; its full sequence is NAD kinase (298 aa).

Catalysis depends on Asp80, which acts as the Proton acceptor. Residues 80–81, 154–155, Arg182, Asp184, 195–200, Ala219, and Gln253 contribute to the NAD(+) site; these read DG, ND, and TAYALS.

Belongs to the NAD kinase family. It depends on a divalent metal cation as a cofactor.

It is found in the cytoplasm. It carries out the reaction NAD(+) + ATP = ADP + NADP(+) + H(+). Its function is as follows. Involved in the regulation of the intracellular balance of NAD and NADP, and is a key enzyme in the biosynthesis of NADP. Catalyzes specifically the phosphorylation on 2'-hydroxyl of the adenosine moiety of NAD to yield NADP. In Delftia acidovorans (strain DSM 14801 / SPH-1), this protein is NAD kinase.